We begin with the raw amino-acid sequence, 326 residues long: ATP synthase gamma chain (326 aa).

It belongs to the ATPase gamma chain family. In terms of assembly, F-type ATPases have 2 components, CF(1) - the catalytic core - and CF(0) - the membrane proton channel. CF(1) has five subunits: alpha(3), beta(3), gamma(1), delta(1), epsilon(1). CF(0) has three main subunits: a, b and c.

Its subcellular location is the cell membrane. In terms of biological role, produces ATP from ADP in the presence of a proton gradient across the membrane. The gamma chain is believed to be important in regulating ATPase activity and the flow of protons through the CF(0) complex. This is ATP synthase gamma chain from Corynebacterium jeikeium (strain K411).